Consider the following 342-residue polypeptide: Putative TPR repeat-containing protein R856 (342 aa).

TPR repeat units follow at residues 36–69 (VHIF…IFNG), 77–110 (FYSV…IKDM), 119–152 (VYAL…NEKL), 161–194 (AFVL…YREK), 203–236 (AFTI…FNKI), 245–278 (AFSL…YKNV), and 291–324 (ASCL…FEST).

The sequence is that of Putative TPR repeat-containing protein R856 from Acanthamoeba polyphaga mimivirus (APMV).